Reading from the N-terminus, the 170-residue chain is Neurotensin/neuromedin N (170 aa).

The signal sequence occupies residues 1-23; that stretch reads MMAGMKIQLVCMLLLAFSSWSLC. Gln-151 is subject to Pyrrolidone carboxylic acid.

The protein belongs to the neurotensin family. Interacts with NTSR1. Interacts with SORT1. Interacts with SORL1. Neurotensin is cleaved and degraded by Angiotensin-converting enzyme (ACE) and neprilysin (MME).

The protein localises to the secreted. It localises to the cytoplasmic vesicle. Its subcellular location is the secretory vesicle. Functionally, neurotensin may play an endocrine or paracrine role in the regulation of fat metabolism. It causes contraction of smooth muscle. The polypeptide is Neurotensin/neuromedin N (NTS) (Homo sapiens (Human)).